We begin with the raw amino-acid sequence, 289 residues long: Acetyl-coenzyme A carboxylase carboxyl transferase subunit beta (289 aa).

Residues 28–289 (VMTKCPKCKK…QGGEMAVWQS (262 aa)) enclose the CoA carboxyltransferase N-terminal domain. 4 residues coordinate Zn(2+): Cys32, Cys35, Cys51, and Cys54. The C4-type zinc-finger motif lies at 32–54 (CPKCKKIMYTKEVLKNLKVCVNC).

Belongs to the AccD/PCCB family. Acetyl-CoA carboxylase is a heterohexamer composed of biotin carboxyl carrier protein (AccB), biotin carboxylase (AccC) and two subunits each of ACCase subunit alpha (AccA) and ACCase subunit beta (AccD). Requires Zn(2+) as cofactor.

Its subcellular location is the cytoplasm. It carries out the reaction N(6)-carboxybiotinyl-L-lysyl-[protein] + acetyl-CoA = N(6)-biotinyl-L-lysyl-[protein] + malonyl-CoA. The protein operates within lipid metabolism; malonyl-CoA biosynthesis; malonyl-CoA from acetyl-CoA: step 1/1. Its function is as follows. Component of the acetyl coenzyme A carboxylase (ACC) complex. Biotin carboxylase (BC) catalyzes the carboxylation of biotin on its carrier protein (BCCP) and then the CO(2) group is transferred by the transcarboxylase to acetyl-CoA to form malonyl-CoA. This is Acetyl-coenzyme A carboxylase carboxyl transferase subunit beta from Bacillus thuringiensis subsp. konkukian (strain 97-27).